The chain runs to 78 residues: Large ribosomal subunit protein bL28 (78 aa).

A disordered region spans residues 1 to 23 (MSRVCQVTGKRPITGNNVSHSKR).

This sequence belongs to the bacterial ribosomal protein bL28 family.

The sequence is that of Large ribosomal subunit protein bL28 from Marinomonas sp. (strain MWYL1).